Consider the following 170-residue polypeptide: MTRSQKEEVVQYLTEEFKNAAAIVDCDYKGMSVSELESLRRIAKEKGLKVRVVKNTLAMIALRNNGVEDFQLKDTNVLIWGDDLVELAKTVTDFAKEHKENFQIKQGYFEGEVADASKIEAYSKLPSKEELLGMLLSVWTAPIRNLLYVWNAPKQNFVTVLENIRQQKES.

The protein belongs to the universal ribosomal protein uL10 family. As to quaternary structure, part of the ribosomal stalk of the 50S ribosomal subunit. The N-terminus interacts with L11 and the large rRNA to form the base of the stalk. The C-terminus forms an elongated spine to which L12 dimers bind in a sequential fashion forming a multimeric L10(L12)X complex.

Its function is as follows. Forms part of the ribosomal stalk, playing a central role in the interaction of the ribosome with GTP-bound translation factors. This Nitratiruptor sp. (strain SB155-2) protein is Large ribosomal subunit protein uL10.